The primary structure comprises 812 residues: MAQMLLHGTLHATIFEAASLSNPHRASGSAPKFIRKFVEGIEDTVGVGKGATKVYSTIDLEKARVGRTRMITNEPINPRWYESFHIYCAHMASNVIFTVKIDNPIGATNIGRAYLPVQELLNGEEIDRWLDICDNNREPVGESKIHVKLQYFDVSKDRNWARGVRSTKYPGVPYTFFSQRQGCKVTLYQDAHVPDNFIPKIPLADGKNYEPHRCWEDIFDAISNAQHLIYITGWSVYTEITLVRDSNRPKPGGDVTLGELLKKKASEGVRVLMLVWDDRTSVGLLKRDGLMATHDEETENYFHGSDVNCVLCPRNPDDSGSIVQDLSISTMFTHHQKIVVVDHELPNQGSQQRRIVSFVGGLDLCDGRYDTQYHSLFRTLDSTHHDDFHQPNFATASIKKGGPREPWHDIHSRLEGPIAWDVLYNFEQRWRKQGGKDLLLQLRDLSDTIIPPSPVMFPEDRETWNVQLFRSIDGGAAFGFPDTPEEAAKAGLVSGKDQIIDRSIQDAYIHAIRRAKNFIYIENQYFLGSSYAWKPEGIKPEDIGALHLIPKELALKVVSKIEAGERFTVYVVVPMWPEGVPESGSVQAILDWQRRTMEMMYTDITEALQAKGIEANPKDYLTFFCLGNREVKQAGEYQPEEQPEADTDYSRAQEARRFMIYVHTKMMIVDDEYIIIGSANINQRSMDGARDSEIAMGGYQPYHLATRQPARGQIHGFRMALWYEHLGMLDDVFQRPESLECVQKVNRIAEKYWDMYSSDDLQQDLPGHLLSYPIGVASDGVVTELPGMEYFPDTRARVLGAKSDYMPPILTS.

The propeptide occupies 1 to 46; sequence MAQMLLHGTLHATIFEAASLSNPHRASGSAPKFIRKFVEGIEDTVG. The 130-residue stretch at 1 to 130 folds into the C2 domain; it reads MAQMLLHGTL…LNGEEIDRWL (130 aa). Asp-190 is a Ca(2+) binding site. The 39-residue stretch at 330 to 368 folds into the PLD phosphodiesterase 1 domain; that stretch reads TMFTHHQKIVVVDHELPNQGSQQRRIVSFVGGLDLCDGR. Catalysis depends on residues His-335, Lys-337, and Asp-342. An a 1,2-diacyl-sn-glycero-3-phosphate-binding site is contributed by His-335. 2 residues coordinate Ca(2+): His-374 and His-408. Gln-524 and His-663 together coordinate a 1,2-diacyl-sn-glycero-3-phosphate. The 28-residue stretch at 658 to 685 folds into the PLD phosphodiesterase 2 domain; the sequence is FMIYVHTKMMIVDDEYIIIGSANINQRS. Residues His-663, Lys-665, and Asp-670 contribute to the active site. Residue Glu-724 coordinates Ca(2+).

The protein belongs to the phospholipase D family. C2-PLD subfamily. Monomer. Ca(2+) is required as a cofactor. In terms of tissue distribution, expressed in leaves, roots, developing seeds and cultured cells.

The catalysed reaction is a 1,2-diacyl-sn-glycero-3-phosphocholine + H2O = a 1,2-diacyl-sn-glycero-3-phosphate + choline + H(+). Hydrolyzes glycerol-phospholipids at the terminal phosphodiesteric bond. Plays an important role in various cellular processes. The protein is Phospholipase D alpha 1 (PLD1) of Oryza sativa subsp. japonica (Rice).